We begin with the raw amino-acid sequence, 91 residues long: Small ribosomal subunit protein uS15c (91 aa).

This sequence belongs to the universal ribosomal protein uS15 family. As to quaternary structure, part of the 30S ribosomal subunit.

The protein resides in the plastid. It localises to the chloroplast. In Ceratophyllum demersum (Rigid hornwort), this protein is Small ribosomal subunit protein uS15c (rps15).